Consider the following 161-residue polypeptide: MPSFDIVSEFDKHEASNAVDQANREIQTRFDFRGVTASFTLEGETVTLEAEVDFQLKQMLDVLRNKLIARGIDARCMDIKEPVTSGVRAHQEVVLKQGLEQPECKDIVKRLKEAKLKVQAQIQGDKVRVTGKKRDELQQAIALLKSDAGPELALQYTNFRD.

Belongs to the YajQ family.

In terms of biological role, nucleotide-binding protein. The polypeptide is Nucleotide-binding protein Csal_2524 (Chromohalobacter salexigens (strain ATCC BAA-138 / DSM 3043 / CIP 106854 / NCIMB 13768 / 1H11)).